A 230-amino-acid polypeptide reads, in one-letter code: Oxygen-evolving enhancer protein 3-2, chloroplastic (230 aa).

A chloroplast-targeting transit peptide spans 1–49 (MAQAVTSMAGLRGASQAVLEGSLQINGSNRLNISRVSVGSQRTGLVIRA). The N-terminal 33 residues, 50-82 (QQNVSVPESSRRSVIGLVAAGLAGGSFVKAVFA), are a transit peptide targeting the thylakoid. S125 bears the Phosphoserine mark. T195 carries the post-translational modification Phosphothreonine. At Y215 the chain carries Phosphotyrosine. S216 is subject to Phosphoserine. At T218 the chain carries Phosphothreonine.

This sequence belongs to the PsbQ family.

It is found in the plastid. The protein resides in the chloroplast thylakoid membrane. In terms of biological role, required for photosystem II assembly/stability and photoautotrophic growth under low light conditions. This Arabidopsis thaliana (Mouse-ear cress) protein is Oxygen-evolving enhancer protein 3-2, chloroplastic (PSBQ2).